The following is a 101-amino-acid chain: Apolipoprotein C-II (101 aa).

A signal peptide spans 1-22 (MGTRCLLVLLLVLLVLRCDVQG). The propeptide at 23–28 (DDMARQ) is removed in mature form. The lipid binding stretch occupies residues 66–74 (AVDEKIRDM). A lipoprotein lipase cofactor region spans residues 78–101 (STAAVRIYTGILTDQILSMLSGDS).

It belongs to the apolipoprotein C2 family. Post-translationally, proapolipoprotein C-II is synthesized as a sialic acid containing glycoprotein which is subsequently desialylated prior to its proteolytic processing. In terms of processing, proapolipoprotein C-II, the major form found in plasma undergoes proteolytic cleavage of its N-terminal hexapeptide to generate the mature form apolipoprotein C-II, which occurs as the minor form in plasma.

The protein localises to the secreted. Functionally, component of chylomicrons, very low-density lipoproteins (VLDL), low-density lipoproteins (LDL), and high-density lipoproteins (HDL) in plasma. Plays an important role in lipoprotein metabolism as an activator of lipoprotein lipase, the enzyme which hydrolyzes the triacylglycerols on chylomicrons and VLDL. This is Apolipoprotein C-II (APOC2) from Acinonyx jubatus (Cheetah).